The following is a 127-amino-acid chain: Glycine cleavage system H protein (127 aa).

The 82-residue stretch at 24 to 105 (TALAGITDFA…YGEGWLVKIK (82 aa)) folds into the Lipoyl-binding domain. Position 65 is an N6-lipoyllysine (Lys65).

It belongs to the GcvH family. The glycine cleavage system is composed of four proteins: P, T, L and H. It depends on (R)-lipoate as a cofactor.

Functionally, the glycine cleavage system catalyzes the degradation of glycine. The H protein shuttles the methylamine group of glycine from the P protein to the T protein. This is Glycine cleavage system H protein from Chlorobium phaeobacteroides (strain DSM 266 / SMG 266 / 2430).